We begin with the raw amino-acid sequence, 298 residues long: 4-hydroxy-tetrahydrodipicolinate synthase (298 aa).

Thr51 serves as a coordination point for pyruvate. The active-site Proton donor/acceptor is the Tyr139. The active-site Schiff-base intermediate with substrate is the Lys167. Ile209 serves as a coordination point for pyruvate.

The protein belongs to the DapA family. Homotetramer; dimer of dimers.

It is found in the cytoplasm. It catalyses the reaction L-aspartate 4-semialdehyde + pyruvate = (2S,4S)-4-hydroxy-2,3,4,5-tetrahydrodipicolinate + H2O + H(+). It functions in the pathway amino-acid biosynthesis; L-lysine biosynthesis via DAP pathway; (S)-tetrahydrodipicolinate from L-aspartate: step 3/4. Functionally, catalyzes the condensation of (S)-aspartate-beta-semialdehyde [(S)-ASA] and pyruvate to 4-hydroxy-tetrahydrodipicolinate (HTPA). This is 4-hydroxy-tetrahydrodipicolinate synthase from Histophilus somni (strain 2336) (Haemophilus somnus).